An 89-amino-acid chain; its full sequence is UPF0237 protein Cgl1544/cg1742 (89 aa).

One can recognise an ACT domain in the interval I4–L82.

The protein belongs to the UPF0237 family.

This chain is UPF0237 protein Cgl1544/cg1742, found in Corynebacterium glutamicum (strain ATCC 13032 / DSM 20300 / JCM 1318 / BCRC 11384 / CCUG 27702 / LMG 3730 / NBRC 12168 / NCIMB 10025 / NRRL B-2784 / 534).